The primary structure comprises 800 residues: Phenylalanine--tRNA ligase beta subunit (800 aa).

In terms of domain architecture, tRNA-binding spans 39–154; it reads TKDIKNLVVG…ESQVPGTDAL (116 aa). A B5 domain is found at 408–483; the sequence is AFITPIDITA…RIYGYDDIPS (76 aa). 4 residues coordinate Mg(2+): aspartate 461, aspartate 467, glutamate 470, and glutamate 471. Positions 708–800 constitute an FDX-ACB domain; that stretch reads PIFPGMSRDI…ALIEQGAVIR (93 aa).

This sequence belongs to the phenylalanyl-tRNA synthetase beta subunit family. Type 1 subfamily. As to quaternary structure, tetramer of two alpha and two beta subunits. It depends on Mg(2+) as a cofactor.

The protein resides in the cytoplasm. The enzyme catalyses tRNA(Phe) + L-phenylalanine + ATP = L-phenylalanyl-tRNA(Phe) + AMP + diphosphate + H(+). The protein is Phenylalanine--tRNA ligase beta subunit of Staphylococcus aureus (strain bovine RF122 / ET3-1).